We begin with the raw amino-acid sequence, 216 residues long: MSLPMLQVALDNQTMDSAYETTRLIAEEVDIIEVGTILCVGEGVRAVRDLKALYPHKIVLADAKIADAGKILSRMCFEANADWVTVICCADINTAKGALDVAKEFNGDVQIELTGYWTWEQAQQWRDAGIQQVVYHRSRDAQAAGVAWGEADITAIKRLSDMGFKVTVTGGLALEDLPLFKGIPIHVFIAGRSIRDAESPVEAARQFKRSIAQLWG.

Substrate is bound at residue Asp11. The Mg(2+) site is built by Glu33 and Asp62. Position 192 (Arg192) interacts with substrate.

This sequence belongs to the HPS/KGPDC family. KGPDC subfamily. Homodimer. Requires Mg(2+) as cofactor.

It catalyses the reaction 3-dehydro-L-gulonate 6-phosphate + H(+) = L-xylulose 5-phosphate + CO2. It functions in the pathway cofactor degradation; L-ascorbate degradation; D-xylulose 5-phosphate from L-ascorbate: step 2/4. Its function is as follows. Catalyzes the decarboxylation of 3-keto-L-gulonate-6-P into L-xylulose-5-P. Is involved in the anaerobic L-ascorbate utilization. The sequence is that of 3-keto-L-gulonate-6-phosphate decarboxylase UlaD from Salmonella choleraesuis (strain SC-B67).